The sequence spans 179 residues: Ribosome maturation factor RimM (179 aa).

Positions Lys100–Leu176 constitute a PRC barrel domain.

This sequence belongs to the RimM family. As to quaternary structure, binds ribosomal protein uS19.

Its subcellular location is the cytoplasm. Its function is as follows. An accessory protein needed during the final step in the assembly of 30S ribosomal subunit, possibly for assembly of the head region. Essential for efficient processing of 16S rRNA. May be needed both before and after RbfA during the maturation of 16S rRNA. It has affinity for free ribosomal 30S subunits but not for 70S ribosomes. This chain is Ribosome maturation factor RimM, found in Prochlorococcus marinus (strain AS9601).